The chain runs to 209 residues: High frequency lysogenization protein HflD homolog (209 aa).

Belongs to the HflD family.

It localises to the cytoplasm. It is found in the cell inner membrane. The protein is High frequency lysogenization protein HflD homolog of Marinomonas sp. (strain MWYL1).